The sequence spans 430 residues: Serine hydroxymethyltransferase (430 aa).

120–122 (GHI) serves as a coordination point for (6S)-5,6,7,8-tetrahydrofolate. Residue Lys-226 is modified to N6-(pyridoxal phosphate)lysine.

Belongs to the SHMT family. Homodimer. It depends on pyridoxal 5'-phosphate as a cofactor.

It is found in the cytoplasm. It participates in amino-acid biosynthesis; glycine biosynthesis; glycine from L-serine: step 1/1. Functionally, catalyzes the reversible interconversion of serine and glycine with a modified folate serving as the one-carbon carrier. Also exhibits a pteridine-independent aldolase activity toward beta-hydroxyamino acids, producing glycine and aldehydes, via a retro-aldol mechanism. This Pyrobaculum neutrophilum (strain DSM 2338 / JCM 9278 / NBRC 100436 / V24Sta) (Thermoproteus neutrophilus) protein is Serine hydroxymethyltransferase.